We begin with the raw amino-acid sequence, 375 residues long: DNA replication and repair protein RecF (375 aa).

Position 34-41 (34-41 (GDNGAGKT)) interacts with ATP.

It belongs to the RecF family.

The protein localises to the cytoplasm. Functionally, the RecF protein is involved in DNA metabolism; it is required for DNA replication and normal SOS inducibility. RecF binds preferentially to single-stranded, linear DNA. It also seems to bind ATP. The chain is DNA replication and repair protein RecF from Rhizobium rhizogenes (strain K84 / ATCC BAA-868) (Agrobacterium radiobacter).